A 186-amino-acid polypeptide reads, in one-letter code: Adenylate kinase (186 aa).

Position 12-17 (12-17 (GAGKGT)) interacts with ATP. Positions 32 to 61 (STGDLLRAEVNAQSPLGKEAALIMNKGELV) are NMP. AMP contacts are provided by residues T33, R38, 59–61 (ELV), 86–89 (GFPR), and Q93. Positions 127 to 133 (SRGRSDD) are LID. Residue R128 participates in ATP binding. The AMP site is built by R130 and R141. Position 169 (G169) interacts with ATP.

Belongs to the adenylate kinase family. In terms of assembly, monomer.

It is found in the cytoplasm. It catalyses the reaction AMP + ATP = 2 ADP. It functions in the pathway purine metabolism; AMP biosynthesis via salvage pathway; AMP from ADP: step 1/1. Catalyzes the reversible transfer of the terminal phosphate group between ATP and AMP. Plays an important role in cellular energy homeostasis and in adenine nucleotide metabolism. This chain is Adenylate kinase, found in Prochlorococcus marinus (strain MIT 9211).